The sequence spans 116 residues: Large ribosomal subunit protein uL18 (116 aa).

The protein belongs to the universal ribosomal protein uL18 family. Part of the 50S ribosomal subunit; part of the 5S rRNA/L5/L18/L25 subcomplex. Contacts the 5S and 23S rRNAs.

Its function is as follows. This is one of the proteins that bind and probably mediate the attachment of the 5S RNA into the large ribosomal subunit, where it forms part of the central protuberance. In Acholeplasma laidlawii (strain PG-8A), this protein is Large ribosomal subunit protein uL18.